We begin with the raw amino-acid sequence, 614 residues long: Threonine--tRNA ligase (614 aa).

The editing domain stretch occupies residues 1–141 (MRLLLIHSDY…LSKTIVPGEE (141 aa)). Positions 198-490 (AHVDLMRSKE…ISTQKVPALP (293 aa)) are catalytic. 3 residues coordinate Zn(2+): Cys-290, His-342, and His-463.

Belongs to the class-II aminoacyl-tRNA synthetase family. As to quaternary structure, homodimer. Zn(2+) serves as cofactor.

Its subcellular location is the cytoplasm. The catalysed reaction is tRNA(Thr) + L-threonine + ATP = L-threonyl-tRNA(Thr) + AMP + diphosphate + H(+). Functionally, catalyzes the attachment of threonine to tRNA(Thr) in a two-step reaction: L-threonine is first activated by ATP to form Thr-AMP and then transferred to the acceptor end of tRNA(Thr). Also edits incorrectly charged L-seryl-tRNA(Thr). The polypeptide is Threonine--tRNA ligase (Methanoregula boonei (strain DSM 21154 / JCM 14090 / 6A8)).